Reading from the N-terminus, the 99-residue chain is UPF0751 protein BCAH820_B0138 (99 aa).

It belongs to the UPF0751 family.

In Bacillus cereus (strain AH820), this protein is UPF0751 protein BCAH820_B0138.